Here is a 600-residue protein sequence, read N- to C-terminus: Aspartate--tRNA(Asp/Asn) ligase (600 aa).

Glu187 contacts L-aspartate. The aspartate stretch occupies residues Gln211–Lys214. The L-aspartate site is built by Arg233 and His463. Arg233–Glu235 contacts ATP. Glu497 provides a ligand contact to ATP. L-aspartate is bound at residue Arg504. An ATP-binding site is contributed by Gly549–Arg552.

It belongs to the class-II aminoacyl-tRNA synthetase family. Type 1 subfamily. In terms of assembly, homodimer.

It is found in the cytoplasm. The catalysed reaction is tRNA(Asx) + L-aspartate + ATP = L-aspartyl-tRNA(Asx) + AMP + diphosphate. Aspartyl-tRNA synthetase with relaxed tRNA specificity since it is able to aspartylate not only its cognate tRNA(Asp) but also tRNA(Asn). Reaction proceeds in two steps: L-aspartate is first activated by ATP to form Asp-AMP and then transferred to the acceptor end of tRNA(Asp/Asn). The protein is Aspartate--tRNA(Asp/Asn) ligase of Wolbachia pipientis subsp. Culex pipiens (strain wPip).